The following is a 368-amino-acid chain: Phosphate acyltransferase (368 aa).

This sequence belongs to the PlsX family. As to quaternary structure, homodimer. Probably interacts with PlsY.

It is found in the cytoplasm. It catalyses the reaction a fatty acyl-[ACP] + phosphate = an acyl phosphate + holo-[ACP]. It functions in the pathway lipid metabolism; phospholipid metabolism. Functionally, catalyzes the reversible formation of acyl-phosphate (acyl-PO(4)) from acyl-[acyl-carrier-protein] (acyl-ACP). This enzyme utilizes acyl-ACP as fatty acyl donor, but not acyl-CoA. The chain is Phosphate acyltransferase from Herpetosiphon aurantiacus (strain ATCC 23779 / DSM 785 / 114-95).